The following is a 92-amino-acid chain: Putative pterin-4-alpha-carbinolamine dehydratase (92 aa).

Belongs to the pterin-4-alpha-carbinolamine dehydratase family.

It catalyses the reaction (4aS,6R)-4a-hydroxy-L-erythro-5,6,7,8-tetrahydrobiopterin = (6R)-L-erythro-6,7-dihydrobiopterin + H2O. This is Putative pterin-4-alpha-carbinolamine dehydratase from Haloarcula marismortui (strain ATCC 43049 / DSM 3752 / JCM 8966 / VKM B-1809) (Halobacterium marismortui).